The following is a 585-amino-acid chain: Pre-mRNA-splicing factor sap145 (585 aa).

Residues 1–74 (MAEIQTAQNP…NNDNLYNDKK (74 aa)) adopt a coiled-coil conformation. The tract at residues 1–84 (MAEIQTAQNP…SNGNFYDTNK (84 aa)) is disordered. Over residues 12–22 (KELEKILERNN) the composition is skewed to basic and acidic residues. Over residues 23–41 (KQKNKKSRNQVRREKKKLL) the composition is skewed to basic residues. Positions 51–62 (LAEKNSDDKDQL) are enriched in basic and acidic residues. Ser145 carries the phosphoserine modification. Residues 400–460 (IHAGTGSPVS…SASEPRSQRE (61 aa)) are disordered. Over residues 416–439 (LEEFEEEESSEEEESEDVEYPTEE) the composition is skewed to acidic residues.

In terms of assembly, belongs to the 40S cdc5-associated complex (or cwf complex), a spliceosome sub-complex reminiscent of a late-stage spliceosome composed of the U2, U5 and U6 snRNAs and at least brr2, cdc5, cwf2/prp3, cwf3/syf1, cwf4/syf3, cwf5/ecm2, spp42/cwf6, cwf7/spf27, cwf8, cwf9, cwf10, cwf11, cwf12, prp45/cwf13, cwf14, cwf15, cwf16, cwf17, cwf18, cwf19, cwf20, cwf21, cwf22, cwf23, cwf24, cwf25, cwf26, cyp7/cwf27, cwf28, cwf29/ist3, lea1, msl1, prp5/cwf1, prp10/sap155, prp12/sap130, prp17, prp22, sap61, sap62, sap114, sap145, slu7, smb1, smd1, smd3, smf1, smg1 and syf2. Sap145 is part of the SF3b subcomplex of the Prp19-associated nineteen complex (NTC), composed of ini1, prp10, prp12/sap130, sap10/sap155, sap14, sap49 and sap145. Part of the U2 snRNP.

It localises to the nucleus. The protein resides in the cytoplasm. In terms of biological role, involved in pre-mRNA splicing. May be involved in endoplasmic reticulum-associated protein degradation (ERAD) and required for growth at low and high temperatures. The polypeptide is Pre-mRNA-splicing factor sap145 (sap145) (Schizosaccharomyces pombe (strain 972 / ATCC 24843) (Fission yeast)).